Consider the following 301-residue polypeptide: Porphobilinogen deaminase (301 aa).

C242 bears the S-(dipyrrolylmethanemethyl)cysteine mark.

It belongs to the HMBS family. In terms of assembly, monomer. Dipyrromethane is required as a cofactor.

The enzyme catalyses 4 porphobilinogen + H2O = hydroxymethylbilane + 4 NH4(+). It participates in porphyrin-containing compound metabolism; protoporphyrin-IX biosynthesis; coproporphyrinogen-III from 5-aminolevulinate: step 2/4. In terms of biological role, tetrapolymerization of the monopyrrole PBG into the hydroxymethylbilane pre-uroporphyrinogen in several discrete steps. The chain is Porphobilinogen deaminase from Rickettsia akari (strain Hartford).